The chain runs to 312 residues: Malate dehydrogenase (312 aa).

Residues 7-12 (GAGNVG) and D32 each bind NAD(+). The substrate site is built by R82 and R88. NAD(+)-binding positions include N95 and 118-120 (VSN). Residues N120 and R151 each coordinate substrate. Residue H175 is the Proton acceptor of the active site.

The protein belongs to the LDH/MDH superfamily. MDH type 3 family.

It carries out the reaction (S)-malate + NAD(+) = oxaloacetate + NADH + H(+). Its function is as follows. Catalyzes the reversible oxidation of malate to oxaloacetate. In Cytophaga hutchinsonii (strain ATCC 33406 / DSM 1761 / CIP 103989 / NBRC 15051 / NCIMB 9469 / D465), this protein is Malate dehydrogenase.